The following is a 728-amino-acid chain: Polyphosphate kinase (728 aa).

Asparagine 57 contacts ATP. Mg(2+) contacts are provided by arginine 408 and arginine 438. The Phosphohistidine intermediate role is filled by histidine 468. ATP contacts are provided by tyrosine 501, arginine 597, and histidine 625. The segment at 694–728 is disordered; sequence VQRRPASPEQSQSSQAIFTAQAIAETTEDPELRSV. Residues 695–709 are compositionally biased toward low complexity; that stretch reads QRRPASPEQSQSSQA.

It belongs to the polyphosphate kinase 1 (PPK1) family. Mg(2+) is required as a cofactor. Post-translationally, an intermediate of this reaction is the autophosphorylated ppk in which a phosphate is covalently linked to a histidine residue through a N-P bond.

It catalyses the reaction [phosphate](n) + ATP = [phosphate](n+1) + ADP. In terms of biological role, catalyzes the reversible transfer of the terminal phosphate of ATP to form a long-chain polyphosphate (polyP). The sequence is that of Polyphosphate kinase from Synechocystis sp. (strain ATCC 27184 / PCC 6803 / Kazusa).